A 416-amino-acid polypeptide reads, in one-letter code: Probable endo-beta-1,4-glucanase celB (416 aa).

An N-terminal signal peptide occupies residues 1-17 (MIWTLAPFVALLPLVTA). N-linked (GlcNAc...) asparagine glycosylation is found at Asn45, Asn104, Asn117, and Asn135. Glu214 serves as the catalytic Nucleophile. Glu219 acts as the Proton donor in catalysis. N-linked (GlcNAc...) asparagine glycosylation is found at Asn233, Asn278, Asn292, and Asn382.

The protein belongs to the glycosyl hydrolase 7 (cellulase C) family.

Its subcellular location is the secreted. The catalysed reaction is Endohydrolysis of (1-&gt;4)-beta-D-glucosidic linkages in cellulose, lichenin and cereal beta-D-glucans.. Its function is as follows. Has endoglucanase activity on substrates containing beta-1,4 glycosidic bonds, like in carboxymethylcellulose (CMC), hydroxyethylcellulose (HEC) and beta-glucan. Involved in the degradation of complex natural cellulosic substrates. This is Probable endo-beta-1,4-glucanase celB (celB) from Aspergillus flavus (strain ATCC 200026 / FGSC A1120 / IAM 13836 / NRRL 3357 / JCM 12722 / SRRC 167).